The following is a 75-amino-acid chain: Antimicrobial peptide ctriporin (75 aa).

Positions 1 to 22 (MDSKYLFVFLIFNVIVIDLCQG) are cleaved as a signal peptide. Lysine 41 carries the lysine amide modification. Positions 47 to 75 (ELGSQYDYLQDFRKRELDLDDLLSKFPDY) are excised as a propeptide.

It belongs to the non-disulfide-bridged peptide (NDBP) superfamily. Short antimicrobial peptide (group 4) family. Expressed by the venom gland.

The protein resides in the secreted. Its subcellular location is the target cell membrane. Antimicrobial peptide that acts by breaking the cell wall. Is active against Gram-positive bacteria, fungi and antibiotic-resistant pathogens: S.aureus (MIC=5 ug/ml), M.luteus (MIC=5 ug/ml), B.thuringiensis (MIC=10 ug/ml), B.subtilis (MIC=10 ug/ml), C.albicans (MIC=20 ug/ml), methicillin-resistant S.aureus (MIC=5-10 ug/ml), and penicillin-resistant S.epidermidis (MIC=10 ug/ml). Also shows potent activity against antibiotic-sensitive and -resistant Acinetobacter baumannii (MIC=10-20 uM). Shows cytolytic activity against human erythrocytes. In vivo, is efficient in curing staphylococcal skin infection in mice, when externally applied. The chain is Antimicrobial peptide ctriporin from Chaerilus tricostatus (Scorpion).